A 546-amino-acid polypeptide reads, in one-letter code: MRTSRLTDLDLWKQLKAHAEKMALPENHLKHLTMAPERLAEFSIQALDMVYDFSRQRVDRQAIDLLMELAWERKVTQRFQAMTTGAVVNTTENRAALHTACRDFSKAKRVVNKIDVTAEMARVRKEIREFSEAVHAGQITGATGKPFAHVVVVGIGGSYLGTEFVARALAAYADKGICLHFLANVDIHNFGEIAEAIDPETTLWVIVSKSFTTAETMANANQAAAFMKEQGLDPARHFVSVTSKGSPGDQTGQDAPFPVLRSFHMFDFIGGRYSVTSAVGGVPLSLYLGYDRFETFLKGAHQMDVHAATAPPTTNMPLTAALLGIWNNNFLEYPAQAIIPYASPLARLAPHVQQLYMESNGKSVTAEGKPLGVRSGVIIFGEPGTNAQHSFFQLAHQGAPFPIDFIGVIKPQYDAFQALSRGVTNHQELWANLISQPRALAEGKESEDGHRSFSGNRPSSTILLEDLSPASVGKLLAFYEARTVYEAFVWGINPFDQYGVELGKKLASEIRSQMAAKNRDAGHTFENVDSISRFYLEKLMGKGNDE.

Residue E358 is the Proton donor of the active site. Residues H389 and K504 contribute to the active site.

The protein belongs to the GPI family.

Its subcellular location is the cytoplasm. It carries out the reaction alpha-D-glucose 6-phosphate = beta-D-fructose 6-phosphate. It participates in carbohydrate biosynthesis; gluconeogenesis. The protein operates within carbohydrate degradation; glycolysis; D-glyceraldehyde 3-phosphate and glycerone phosphate from D-glucose: step 2/4. Its function is as follows. Catalyzes the reversible isomerization of glucose-6-phosphate to fructose-6-phosphate. This Desulfosudis oleivorans (strain DSM 6200 / JCM 39069 / Hxd3) (Desulfococcus oleovorans) protein is Glucose-6-phosphate isomerase.